The chain runs to 1086 residues: Lysine-specific demethylase 4B (1086 aa).

A JmjN domain is found at 15 to 57 (IMTFRPTMDEFRDFNRYVAYIESQGAHRAGLAKIIPPKEWKPR). Residue Y133 coordinates 2-oxoglutarate. The region spanning 146–309 (VAQWNIGNLR…YGKVATQCTC (164 aa)) is the JmjC domain. Fe cation is bound by residues H189 and E191. 2-oxoglutarate-binding residues include N199 and K207. Residues C235 and H241 each coordinate Zn(2+). K242 serves as a coordination point for 2-oxoglutarate. H277 contacts Fe cation. Residues C307 and C309 each contribute to the Zn(2+) site. Residues 379 to 395 (SRPWRKAEEERRREPTR) show a composition bias toward basic and acidic residues. Disordered regions lie at residues 379-536 (SRPW…PPGA) and 575-624 (PMEL…LSVV). Over residues 401–410 (SHRRRSQPKK) the composition is skewed to basic residues. Over residues 441–450 (MPEDEEEEEL) the composition is skewed to acidic residues. Residues 456–467 (HEAEGVEEDGRG) are compositionally biased toward basic and acidic residues. Basic residues predominate over residues 468-480 (KPRPTKARNKKKT). Low complexity predominate over residues 512–522 (GPAMGPMAAEG). Polar residues predominate over residues 585–597 (QAQAGDSQGTTPF). K599 is subject to N6-acetyllysine. The PHD-type 1 zinc finger occupies 719–777 (MCFTSSGENTEPLPANSYVGEDGTSPLISCAHCCLQVHASCYGVRPELAKEGWTCSRCA). The segment at 782-815 (TAECCLCNLRGGALQRTTEHRWIHVICAIAVPEV) adopts a C2HC pre-PHD-type zinc-finger fold. The segment at 838-895 (LKCIYCRKRMKRVSGACIQCSYEHCSTSFHVTCAHAAGVLMEPDDWPYVVSITCLKHR) adopts a PHD-type 2 zinc-finger fold. Tudor domains follow at residues 905–962 (RTVS…CLRL) and 963–1019 (GPPP…EELP). The segment at 1024 to 1043 (SRLSLSTGTPQEPSFSGDDV) is disordered. A compositionally biased stretch (polar residues) spans 1026 to 1037 (LSLSTGTPQEPS).

This sequence belongs to the JHDM3 histone demethylase family. The cofactor is Fe(2+).

It localises to the nucleus. The enzyme catalyses N(6),N(6),N(6)-trimethyl-L-lysyl(9)-[histone H3] + 2 2-oxoglutarate + 2 O2 = N(6)-methyl-L-lysyl(9)-[histone H3] + 2 formaldehyde + 2 succinate + 2 CO2. Functionally, histone demethylase that specifically demethylates 'Lys-9' of histone H3, thereby playing a role in histone code. Does not demethylate histone H3 'Lys-4', H3 'Lys-27', H3 'Lys-36' nor H4 'Lys-20'. Only able to demethylate trimethylated H3 'Lys-9', with a weaker activity than KDM4A, KDM4C and KDM4D. Demethylation of Lys residue generates formaldehyde and succinate. Plays a critical role in the development of the central nervous system (CNS). In Mus musculus (Mouse), this protein is Lysine-specific demethylase 4B (Kdm4b).